The following is a 350-amino-acid chain: Biotin synthase (350 aa).

Residues 38–256 (NHVQVSTLLS…IAIARIMMPQ (219 aa)) form the Radical SAM core domain. Positions 53, 57, and 60 each coordinate [4Fe-4S] cluster. [2Fe-2S] cluster contacts are provided by C97, C128, C188, and R260.

It belongs to the radical SAM superfamily. Biotin synthase family. Homodimer. The cofactor is [4Fe-4S] cluster. [2Fe-2S] cluster serves as cofactor.

The catalysed reaction is (4R,5S)-dethiobiotin + (sulfur carrier)-SH + 2 reduced [2Fe-2S]-[ferredoxin] + 2 S-adenosyl-L-methionine = (sulfur carrier)-H + biotin + 2 5'-deoxyadenosine + 2 L-methionine + 2 oxidized [2Fe-2S]-[ferredoxin]. It participates in cofactor biosynthesis; biotin biosynthesis; biotin from 7,8-diaminononanoate: step 2/2. Functionally, catalyzes the conversion of dethiobiotin (DTB) to biotin by the insertion of a sulfur atom into dethiobiotin via a radical-based mechanism. The protein is Biotin synthase of Vibrio parahaemolyticus serotype O3:K6 (strain RIMD 2210633).